The chain runs to 1239 residues: DNA polymerase subunit gamma-1 (1239 aa).

Positions M1 to Q68 are disordered. Composition is skewed to low complexity over residues V9–S36 and Q44–Q60. The does not contribute to polymerase and exonuclease enzymatic activities stretch occupies residues Q43–Q55. An Exo I motif is present at residues V196–E200. The active-site Exonuclease activity is D198. The Exo II motif lies at V267–R275. S306 contacts DNA. The disordered stretch occupies residues G318 to P340. Residues Y395–T403 carry the Exo III motif. The disordered stretch occupies residues E506–G531. Residues A510–G571 form an accessory-interacting determinant region. Residue R579 coordinates RNA. Residue S593 coordinates DNA. Positions 754, 763, and 768 each coordinate RNA. DNA-binding residues include K806 and T849. The segment at T858–N864 is trigger loop. 2 residues coordinate RNA: S863 and R869. The Pol A motif lies at V887 to L896. A 2'-deoxyribonucleoside 5'-triphosphate contacts are provided by D890, V891, S893, E895, R943, K947, and Y951. Residues D890 and V891 each contribute to the Mg(2+) site. Positions R943–G958 match the Pol B motif. 2 residues coordinate DNA: T1094 and S1095. Positions H1134–V1141 match the Pol C motif. D1135 provides a ligand contact to a 2'-deoxyribonucleoside 5'-triphosphate. D1135 is a binding site for Mg(2+).

This sequence belongs to the DNA polymerase type-A family. Heterotrimer composed of a catalytic subunit and a homodimer of accessory subunits (POLG:POLG2). Interacts with TTC3. Interacts with LIG3. The cofactor is Mg(2+).

The protein resides in the mitochondrion. It is found in the mitochondrion matrix. It localises to the mitochondrion nucleoid. It carries out the reaction DNA(n) + a 2'-deoxyribonucleoside 5'-triphosphate = DNA(n+1) + diphosphate. The enzyme catalyses a 3'-end 2'-deoxyribonucleotidyl-deoxyribonucleotide-DNA + H2O = a 3'-end 2'-deoxyribonucleotide-DNA + a 2'-deoxyribonucleoside 5'-phosphate + H(+). It catalyses the reaction a 5'-end 2'-deoxyribose-2'-deoxyribonucleotide-DNA = (2E,4S)-4-hydroxypenten-2-al-5-phosphate + a 5'-end 5'-phospho-2'-deoxyribonucleoside-DNA + H(+). With respect to regulation, inhibited by dideoxynucleotides such as antiviral agent zalcitabine. In terms of biological role, catalytic subunit of DNA polymerase gamma solely responsible for replication of mitochondrial DNA (mtDNA). Replicates both heavy and light strands of the circular mtDNA genome using a single-stranded DNA template, RNA primers and the four deoxyribonucleoside triphosphates as substrates. Has 5' -&gt; 3' polymerase activity. Functionally interacts with TWNK and SSBP1 at the replication fork to form a highly processive replisome, where TWNK unwinds the double-stranded DNA template prior to replication and SSBP1 covers the parental heavy strand to enable continuous replication of the entire mitochondrial genome. A single nucleotide incorporation cycle includes binding of the incoming nucleotide at the insertion site, a phosphodiester bond formation reaction that extends the 3'-end of the primer DNA, and translocation of the primer terminus to the post-insertion site. After completing replication of a mtDNA strand, mediates 3' -&gt; 5' exonucleolytic degradation at the nick to enable proper ligation. Highly accurate due to high nucleotide selectivity and 3' -&gt; 5' exonucleolytic proofreading. Proficiently corrects base substitutions, single-base additions and deletions in non-repetitive sequences and short repeats, but displays lower proofreading activity when replicating longer homopolymeric stretches. Exerts exonuclease activity toward single-stranded DNA and double-stranded DNA containing 3'-terminal mispairs. When a misincorporation occurs, transitions from replication to a pro-nucleolytic editing mode and removes the missincorporated nucleoside in the exonuclease active site. Proceeds via an SN2 nucleolytic mechanism in which Asp-198 catalyzes phosphodiester bond hydrolysis and Glu-200 stabilizes the leaving group. As a result the primer strand becomes one nucleotide shorter and is positioned in the post-insertion site, ready to resume DNA synthesis. Exerts 5'-deoxyribose phosphate (dRP) lyase activity and mediates repair-associated mtDNA synthesis (gap filling) in base-excision repair pathway. Catalyzes the release of the 5'-terminal 2-deoxyribose-5-phosphate sugar moiety from incised apurinic/apyrimidinic (AP) sites to produce a substrate for DNA ligase. The dRP lyase reaction does not require divalent metal ions and likely proceeds via a Schiff base intermediate in a beta-elimination reaction mechanism. The protein is DNA polymerase subunit gamma-1 of Homo sapiens (Human).